The chain runs to 317 residues: tRNA dimethylallyltransferase (317 aa).

21 to 28 (GPTASGKS) is a binding site for ATP. 23–28 (TASGKS) lines the substrate pocket. The interaction with substrate tRNA stretch occupies residues 46-49 (DSMQ).

The protein belongs to the IPP transferase family. In terms of assembly, monomer. It depends on Mg(2+) as a cofactor.

It carries out the reaction adenosine(37) in tRNA + dimethylallyl diphosphate = N(6)-dimethylallyladenosine(37) in tRNA + diphosphate. In terms of biological role, catalyzes the transfer of a dimethylallyl group onto the adenine at position 37 in tRNAs that read codons beginning with uridine, leading to the formation of N6-(dimethylallyl)adenosine (i(6)A). In Nitrobacter hamburgensis (strain DSM 10229 / NCIMB 13809 / X14), this protein is tRNA dimethylallyltransferase.